The sequence spans 706 residues: G2/M phase-specific E3 ubiquitin-protein ligase (706 aa).

The segment at 11–51 (NLACVFCRKHDDCPNKYGEKKTKEKWNLTVHYYCLLMSSGI) adopts a C2HC pre-PHD-type zinc-finger fold. The PHD-type 1 zinc-finger motif lies at 79–128 (LKCCVCKKNGASIGCVAPRCKRSYHFPCGLQRECIFQFTGNFASFCWDHR). The segment at 143–193 (PCTICLEFIEPIPSYNILRSPCCKNAWFHRDCLQVQAINAGVFFFRCTICN) adopts a PHD-type 2; degenerate zinc-finger fold. The PHD-type 3 zinc-finger motif lies at 237-286 (RCRCKEGRDYNAPDSKWEIKRCQCCGSSGTHLACSSLRSWEQNWECLECR). Residues 371–698 (IWNSALDAFR…IRNTLRLEKE (328 aa)) enclose the HECT domain.

In terms of tissue distribution, predominantly expressed in brain, liver, kidney, testes and ovary.

It is found in the nucleus. It localises to the nucleolus. The protein resides in the cytoplasm. It catalyses the reaction S-ubiquitinyl-[E2 ubiquitin-conjugating enzyme]-L-cysteine + [acceptor protein]-L-lysine = [E2 ubiquitin-conjugating enzyme]-L-cysteine + N(6)-ubiquitinyl-[acceptor protein]-L-lysine.. The protein operates within protein modification; protein ubiquitination. Functionally, E3 ubiquitin-protein ligase which accepts ubiquitin from an E2 ubiquitin-conjugating enzyme in the form of a thioester and then directly transfers the ubiquitin to targeted substrates. Essential in early embryonic development to prevent apoptotic death. The polypeptide is G2/M phase-specific E3 ubiquitin-protein ligase (G2E3) (Homo sapiens (Human)).